The sequence spans 359 residues: Tropomodulin-1 (359 aa).

Positions 39-61 (PDNALLPAGLRQKDQTTKAPTGP) are disordered. A tropomyosin-binding region spans residues 39-138 (PDNALLPAGL…CDIAAILGMH (100 aa)).

It belongs to the tropomodulin family. In terms of assembly, binds to the N-terminus of tropomyosin and to actin. Interacts with FLII.

It is found in the cytoplasm. The protein resides in the cytoskeleton. Its function is as follows. Blocks the elongation and depolymerization of the actin filaments at the pointed end. The Tmod/TM complex contributes to the formation of the short actin protofilament, which in turn defines the geometry of the membrane skeleton. May play an important role in regulating the organization of actin filaments by preferentially binding to a specific tropomyosin isoform at its N-terminus. The sequence is that of Tropomodulin-1 (TMOD1) from Bos taurus (Bovine).